Reading from the N-terminus, the 159-residue chain is UPF0201 protein MK0399 (159 aa).

It belongs to the UPF0201 family.

This Methanopyrus kandleri (strain AV19 / DSM 6324 / JCM 9639 / NBRC 100938) protein is UPF0201 protein MK0399.